Here is a 506-residue protein sequence, read N- to C-terminus: Histidine ammonia-lyase (506 aa).

The 5-imidazolinone (Ala-Gly) cross-link spans A143 to G145. Residue S144 is modified to 2,3-didehydroalanine (Ser).

Belongs to the PAL/histidase family. Contains an active site 4-methylidene-imidazol-5-one (MIO), which is formed autocatalytically by cyclization and dehydration of residues Ala-Ser-Gly.

It localises to the cytoplasm. The enzyme catalyses L-histidine = trans-urocanate + NH4(+). It participates in amino-acid degradation; L-histidine degradation into L-glutamate; N-formimidoyl-L-glutamate from L-histidine: step 1/3. The sequence is that of Histidine ammonia-lyase from Citrobacter koseri (strain ATCC BAA-895 / CDC 4225-83 / SGSC4696).